Reading from the N-terminus, the 156-residue chain is Endoribonuclease YbeY (156 aa).

Histidine 122, histidine 126, and histidine 132 together coordinate Zn(2+).

The protein belongs to the endoribonuclease YbeY family. It depends on Zn(2+) as a cofactor.

Its subcellular location is the cytoplasm. In terms of biological role, single strand-specific metallo-endoribonuclease involved in late-stage 70S ribosome quality control and in maturation of the 3' terminus of the 16S rRNA. The chain is Endoribonuclease YbeY from Geobacillus kaustophilus (strain HTA426).